Reading from the N-terminus, the 397-residue chain is Protein Mx1 (397 aa).

It belongs to the TRAFAC class dynamin-like GTPase superfamily. Dynamin/Fzo/YdjA family.

The chain is Protein Mx1 (Mx1) from Mus musculus (Mouse).